Here is a 264-residue protein sequence, read N- to C-terminus: Endochitinase At2g43590 (264 aa).

The first 24 residues, 1-24 (MAFTKISLVLLLCLLGFFSETVKS), serve as a signal peptide directing secretion. In terms of domain architecture, Chitin-binding type-1 spans 25–59 (QNCGCAPNLCCSQFGYCGTDDAYCGVGCRSGPCRG). Cystine bridges form between Cys27–Cys35, Cys29–Cys41, Cys34–Cys48, and Cys52–Cys57. Positions 66–264 (GSVGSIVTQG…GVDPGPNLSC (199 aa)) are catalytic. Catalysis depends on Glu128, which acts as the Proton donor. The N-linked (GlcNAc...) asparagine glycan is linked to Asn261.

This sequence belongs to the glycosyl hydrolase 19 family. Chitinase class I subfamily.

It catalyses the reaction Random endo-hydrolysis of N-acetyl-beta-D-glucosaminide (1-&gt;4)-beta-linkages in chitin and chitodextrins.. In Arabidopsis thaliana (Mouse-ear cress), this protein is Endochitinase At2g43590.